We begin with the raw amino-acid sequence, 266 residues long: Small ribosomal subunit protein uS2 (266 aa).

Residues 247–266 are disordered; that stretch reads EGENNYSNNRSWNKPERTNN. The segment covering 249–258 has biased composition (polar residues); it reads ENNYSNNRSW.

Belongs to the universal ribosomal protein uS2 family.

This Mesoplasma florum (strain ATCC 33453 / NBRC 100688 / NCTC 11704 / L1) (Acholeplasma florum) protein is Small ribosomal subunit protein uS2.